A 258-amino-acid chain; its full sequence is NAD kinase (258 aa).

The active-site Proton acceptor is D45. NAD(+) contacts are provided by residues 45–46, 117–118, D147, A155, 158–163, and A182; these read DG, NE, and TAYNYS.

Belongs to the NAD kinase family. It depends on a divalent metal cation as a cofactor.

It localises to the cytoplasm. The enzyme catalyses NAD(+) + ATP = ADP + NADP(+) + H(+). Involved in the regulation of the intracellular balance of NAD and NADP, and is a key enzyme in the biosynthesis of NADP. Catalyzes specifically the phosphorylation on 2'-hydroxyl of the adenosine moiety of NAD to yield NADP. This chain is NAD kinase, found in Xanthomonas campestris pv. campestris (strain 8004).